Consider the following 295-residue polypeptide: UDP-N-acetylenolpyruvoylglucosamine reductase (295 aa).

Positions 23–188 constitute an FAD-binding PCMH-type domain; it reads QVGGPADFLA…ISAKFALKPG (166 aa). Residue arginine 167 is part of the active site. Serine 217 (proton donor) is an active-site residue. Residue glutamate 287 is part of the active site.

This sequence belongs to the MurB family. Requires FAD as cofactor.

The protein resides in the cytoplasm. It catalyses the reaction UDP-N-acetyl-alpha-D-muramate + NADP(+) = UDP-N-acetyl-3-O-(1-carboxyvinyl)-alpha-D-glucosamine + NADPH + H(+). Its pathway is cell wall biogenesis; peptidoglycan biosynthesis. Functionally, cell wall formation. The chain is UDP-N-acetylenolpyruvoylglucosamine reductase from Streptococcus equi subsp. equi (strain 4047).